Here is a 418-residue protein sequence, read N- to C-terminus: Putative ion-transport protein YfeO (418 aa).

A run of 12 helical transmembrane segments spans residues 10 to 30 (LLLSLPAVAIGIASSLILIMV), 54 to 74 (DSPLWIIGVLTLTGIAVGLVI), 99 to 119 (ALPGLIVALILGLAGGVSLGP), 120 to 140 (EHPIMTVNIALAVAIGARLLP), 149 to 169 (ILASAGTIGALFGTPVAAALI), 186 to 206 (LFAPLMAAAAGALTTGLFFHP), 223 to 243 (ILSGAIVAAIAIAAGMVAVWC), 258 to 278 (VFVLGIGGLILGILGVIGGPV), 300 to 320 (DYFLLAVIKLAALVVAAASGF), 322 to 342 (GGRIFPAVFVGVALGLMLHEH), 343 to 363 (VPAVPAAITVSCAILGIVLVV), and 371 to 391 (LFMAAVVVPNTTLLPLLCIVM).

The protein belongs to the chloride channel (TC 2.A.49) family.

It localises to the cell membrane. The protein is Putative ion-transport protein YfeO of Escherichia coli O45:K1 (strain S88 / ExPEC).